The chain runs to 253 residues: Tropomyosin-1 (253 aa).

Residues 7–253 (VNKLVRLQGK…MDDVGDDDTQ (247 aa)) adopt a coiled-coil conformation.

This sequence belongs to the tropomyosin family. In terms of assembly, homodimer.

Functionally, tropomyosin, in association with the troponin complex, plays a central role in the calcium dependent regulation of muscle contraction. In Hydra vulgaris (Hydra), this protein is Tropomyosin-1 (TROP1).